Reading from the N-terminus, the 105-residue chain is TMEM14 protein homolog YJR085C (105 aa).

Helical transmembrane passes span 26–46, 53–73, and 77–97; these read IPSL…GYLL, GLEM…IRGM, and FTKP…YYYY.

Belongs to the TMEM14 family.

The protein localises to the mitochondrion. It is found in the membrane. The sequence is that of TMEM14 protein homolog YJR085C from Saccharomyces cerevisiae (strain ATCC 204508 / S288c) (Baker's yeast).